The chain runs to 67 residues: Protein AaeX (67 aa).

The next 2 membrane-spanning stretches (helical) occupy residues 3–23 (LFPV…ELLL) and 43–63 (FVWH…YLIS).

It belongs to the AaeX family.

The protein resides in the cell membrane. The protein is Protein AaeX of Escherichia coli O1:K1 / APEC.